We begin with the raw amino-acid sequence, 279 residues long: Undecaprenyl-diphosphatase (279 aa).

7 helical membrane passes run Phe-10–Ile-30, Leu-48–Phe-68, Leu-96–Leu-116, Gly-128–Ile-148, Ser-203–Phe-223, Ile-229–Ile-249, and Asn-259–Leu-279.

This sequence belongs to the UppP family.

The protein resides in the cell inner membrane. It catalyses the reaction di-trans,octa-cis-undecaprenyl diphosphate + H2O = di-trans,octa-cis-undecaprenyl phosphate + phosphate + H(+). Catalyzes the dephosphorylation of undecaprenyl diphosphate (UPP). Confers resistance to bacitracin. This is Undecaprenyl-diphosphatase from Prochlorococcus marinus (strain NATL1A).